The sequence spans 180 residues: MANPFVRNQSFKSVFFKNLVGITLWVPVLMFVEQHVVSVGTIEGRSMKPAFNPETNMLQRDRVLLWKWNKDYKRGDVVILRSPENPEELLVKRVLGVEYDIMKTRPPKKLSLVPVPEGHVWVEGDEQFHSIDSNKFGPVSTGLITAKVIAILFPFSRAGRIDHEGFRKNAVFLSGKRSVK.

A helical transmembrane segment spans residues 19 to 39 (LVGITLWVPVLMFVEQHVVSV). Active-site residues include S46 and K92.

This sequence belongs to the peptidase S26 family. IMP2 subfamily. In terms of assembly, heterodimer of 2 subunits, imp1 and imp2.

Its subcellular location is the mitochondrion inner membrane. Catalyzes the removal of transit peptides required for the targeting of proteins from the mitochondrial matrix, across the inner membrane, into the inter-membrane space. In Schizosaccharomyces pombe (strain 972 / ATCC 24843) (Fission yeast), this protein is Mitochondrial inner membrane protease subunit 2.